Here is a 1204-residue protein sequence, read N- to C-terminus: Exportin-5 (1204 aa).

The necessary for interaction with Ran stretch occupies residues 1–108 (MEMEQVNALC…ANGTLRILEE (108 aa)). Lys-396 carries the post-translational modification N6-acetyllysine. Residues 533 to 640 (ELLQLVLNFE…KQLLSNELLL (108 aa)) form a necessary for interaction with ILF3 region. The interval 641–642 (TQ) is pre-siRNA binding.

It belongs to the exportin family. Component of a nuclear export receptor complex composed of XPO5, RAN, dsRNA-binding proteins and dsRNA. Found in a nuclear export complex with XPO5, RAN, EEF1A1, and aminoacylated tRNA. Found in a nuclear export complex with XPO5, RAN, ILF3 and dsRNA. Found in a nuclear export complex with XPO5, RAN and pre-miRNA. Found in a nuclear export complex with XPO5, RAN, ILF3 and minihelix VA1 dsRNA. Found in a nuclear export complex with XPO5, RAN, ILF3, ZNF346 and dsRNA. Interacts with EEF1A1, ILF3, NUP153, NUP214 and ZNF346. Interacts with RAN and cargo proteins in a GTP-dependent manner. Interacts with ADAR/ADAR1 (via DRBM domains). Interacts with SMAD4; mediates nuclear export of SMAD4. Interacts with RAN (GTP-bound form).

It is found in the nucleus. The protein resides in the cytoplasm. In terms of biological role, mediates the nuclear export of proteins bearing a double-stranded RNA binding domain (dsRBD) and double-stranded RNAs (cargos). XPO5 in the nucleus binds cooperatively to the RNA and to the GTPase Ran in its active GTP-bound form. Proteins containing dsRBDs can associate with this trimeric complex through the RNA. Docking of this complex to the nuclear pore complex (NPC) is mediated through binding to nucleoporins. Upon transit of a nuclear export complex into the cytoplasm, hydrolysis of Ran-GTP to Ran-GDP (induced by RANBP1 and RANGAP1, respectively) cause disassembly of the complex and release of the cargo from the export receptor. XPO5 then returns to the nuclear compartment by diffusion through the nuclear pore complex, to mediate another round of transport. The directionality of nuclear export is thought to be conferred by an asymmetric distribution of the GTP- and GDP-bound forms of Ran between the cytoplasm and nucleus. Overexpression may in some circumstances enhance RNA-mediated gene silencing (RNAi). Mediates nuclear export of ADAR/ADAR1 in a RanGTP-dependent manner. Functionally, mediates the nuclear export of micro-RNA precursors, which form short hairpins. Also mediates the nuclear export of synthetic short hairpin RNAs used for RNA interference. In some circumstances can also mediate the nuclear export of deacylated and aminoacylated tRNAs. Specifically recognizes dsRNAs that lack a 5'-overhang in a sequence-independent manner, have only a short 3'-overhang, and that have a double-stranded length of at least 15 base-pairs. Binding is dependent on Ran-GTP. The protein is Exportin-5 (Xpo5) of Mus musculus (Mouse).